The sequence spans 210 residues: Probable GTP-binding protein EngB (210 aa).

The region spanning 27–201 (MGIEVAFAGR…HQKLDIWFSQ (175 aa)) is the EngB-type G domain. GTP is bound by residues 35 to 42 (GRSNAGKS), 62 to 66 (GRTQL), 80 to 83 (DLPG), 147 to 150 (TKAD), and 180 to 182 (FSV). Mg(2+)-binding residues include S42 and T64.

Belongs to the TRAFAC class TrmE-Era-EngA-EngB-Septin-like GTPase superfamily. EngB GTPase family. It depends on Mg(2+) as a cofactor.

Its function is as follows. Necessary for normal cell division and for the maintenance of normal septation. The sequence is that of Probable GTP-binding protein EngB from Photorhabdus laumondii subsp. laumondii (strain DSM 15139 / CIP 105565 / TT01) (Photorhabdus luminescens subsp. laumondii).